Reading from the N-terminus, the 492-residue chain is N-succinylglutamate 5-semialdehyde dehydrogenase (492 aa).

220 to 225 (GSANTG) is a binding site for NAD(+). Active-site residues include glutamate 243 and cysteine 277.

It belongs to the aldehyde dehydrogenase family. AstD subfamily.

The catalysed reaction is N-succinyl-L-glutamate 5-semialdehyde + NAD(+) + H2O = N-succinyl-L-glutamate + NADH + 2 H(+). It functions in the pathway amino-acid degradation; L-arginine degradation via AST pathway; L-glutamate and succinate from L-arginine: step 4/5. Functionally, catalyzes the NAD-dependent reduction of succinylglutamate semialdehyde into succinylglutamate. This Escherichia coli (strain K12 / MC4100 / BW2952) protein is N-succinylglutamate 5-semialdehyde dehydrogenase.